Reading from the N-terminus, the 444-residue chain is Glycerol-3-phosphate transporter (444 aa).

Residues 1-36 lie on the Cytoplasmic side of the membrane; sequence MLNIFKPAPHIERLDDSKMDAAYKRLRLQVFIGIFI. The chain crosses the membrane as a helical span at residues 37–57; that stretch reads GYAGYYLLRKNFAFAIPYLQE. Topologically, residues 58–63 are extracellular; that stretch reads QGFSKT. Residues 64 to 84 form a helical membrane-spanning segment; sequence ELGLVLAAVSIAYGFSKFIMG. Topologically, residues 85–93 are cytoplasmic; that stretch reads MVSDRCNPR. Residues 94 to 112 traverse the membrane as a helical segment; it reads YFLATGLFLSAIVNILFVS. Over 113 to 120 the chain is Extracellular; that stretch reads MPWVTSSV. The chain crosses the membrane as a helical span at residues 121–141; it reads TIMFIFMFINGWFQGMGWPPC. The Cytoplasmic segment spans residues 142–160; sequence GRTMAHWFSISERGTKMSI. A helical transmembrane segment spans residues 161 to 180; that stretch reads WNVAHNIGGGILAPLVTLGI. Topologically, residues 181–189 are extracellular; sequence AMFVTWKSV. A helical transmembrane segment spans residues 190–207; that stretch reads FFFPAIIAIIISFLIVLL. Residues 208–261 lie on the Cytoplasmic side of the membrane; that stretch reads VRDTPQSCGLPPIEEYRNDYPKHAFKNQEKELTTKEILFQYVLNNKFLWYIAFA. A helical membrane pass occupies residues 262–282; it reads NVFVYFVRYGVVDWAPTYLTE. Residues 283–287 are Extracellular-facing; sequence AKGFS. The chain crosses the membrane as a helical span at residues 288–308; that stretch reads PEDSRWSYFLYEYAGIPGTIL. Residues 309–321 lie on the Cytoplasmic side of the membrane; it reads CGWISDRFFKSRR. The helical transmembrane segment at 322 to 341 threads the bilayer; sequence APAGVLFMAGVFIAVLVYWL. Residues 342-346 lie on the Extracellular side of the membrane; the sequence is NPAGN. The chain crosses the membrane as a helical span at residues 347–368; sequence PLVDNIALISIGFLIYGPVMLI. Over 369–387 the chain is Cytoplasmic; it reads GLQAIDLAPKKAAGTAAGL. A helical transmembrane segment spans residues 388-409; it reads TGFFGYIGGSAFANAIMGFVVD. The Extracellular segment spans residues 410–414; sequence RFNWN. A helical membrane pass occupies residues 415 to 435; that stretch reads GGFIMLISSCILAIVFLALTW. The Cytoplasmic portion of the chain corresponds to 436 to 444; that stretch reads NTGKRAEHV.

Belongs to the major facilitator superfamily. Organophosphate:Pi antiporter (OPA) (TC 2.A.1.4) family.

Its subcellular location is the cell membrane. Functionally, responsible for glycerol-3-phosphate uptake. The polypeptide is Glycerol-3-phosphate transporter (glpT) (Bacillus subtilis (strain 168)).